The following is a 560-amino-acid chain: CTP synthase (560 aa).

The amidoligase domain stretch occupies residues 1 to 272 (MSIGDVCSAR…DTQILSHFGM (272 aa)). S20 is a binding site for CTP. S20 is a UTP binding site. ATP is bound by residues 21-26 (SLGKGL) and D78. The Mg(2+) site is built by D78 and E146. CTP is bound by residues 153 to 155 (DIE), 193 to 198 (KTKPTQ), and K229. UTP is bound by residues 193–198 (KTKPTQ) and K229. The region spanning 297–539 (TIAIIGKYTK…VQNVLQIKQR (243 aa)) is the Glutamine amidotransferase type-1 domain. G356 provides a ligand contact to L-glutamine. Residue C383 is the Nucleophile; for glutamine hydrolysis of the active site. Residues 384-387 (MGMQ), E407, and R467 each bind L-glutamine. Residues H512 and E514 contribute to the active site.

It belongs to the CTP synthase family. In terms of assembly, homotetramer.

It catalyses the reaction UTP + L-glutamine + ATP + H2O = CTP + L-glutamate + ADP + phosphate + 2 H(+). The enzyme catalyses L-glutamine + H2O = L-glutamate + NH4(+). The catalysed reaction is UTP + NH4(+) + ATP = CTP + ADP + phosphate + 2 H(+). Its pathway is pyrimidine metabolism; CTP biosynthesis via de novo pathway; CTP from UDP: step 2/2. With respect to regulation, allosterically activated by GTP, when glutamine is the substrate; GTP has no effect on the reaction when ammonia is the substrate. The allosteric effector GTP functions by stabilizing the protein conformation that binds the tetrahedral intermediate(s) formed during glutamine hydrolysis. Inhibited by the product CTP, via allosteric rather than competitive inhibition. Functionally, catalyzes the ATP-dependent amination of UTP to CTP with either L-glutamine or ammonia as the source of nitrogen. Regulates intracellular CTP levels through interactions with the four ribonucleotide triphosphates. The chain is CTP synthase from Anaplasma marginale (strain Florida).